The following is a 109-amino-acid chain: Iron-sulfur cluster assembly protein CyaY (109 aa).

It belongs to the frataxin family.

In terms of biological role, involved in iron-sulfur (Fe-S) cluster assembly. May act as a regulator of Fe-S biogenesis. This Shewanella sp. (strain ANA-3) protein is Iron-sulfur cluster assembly protein CyaY.